The primary structure comprises 376 residues: Guanine nucleotide-binding protein G(s) subunit alpha (376 aa).

A lipid anchor (N-palmitoyl glycine) is attached at G2. Residue C3 is the site of S-palmitoyl cysteine attachment. Residues 36-376 (GTHRLLLLGA…RMHLRQYELL (341 aa)) enclose the G-alpha domain. The interval 39–52 (RLLLLGAGESGKST) is G1 motif. GTP contacts are provided by residues 44-51 (GAGESGKS), 180-186 (LRCRVLT), 205-209 (DVGGQ), 274-277 (NKQD), and A348. Positions 51 and 186 each coordinate Mg(2+). The G2 motif stretch occupies residues 178 to 186 (DILRCRVLT). The tract at residues 201-210 (FHMFDVGGQR) is G3 motif. Residues 270 to 277 (ILFLNKQD) form a G4 motif region. The tract at residues 346–351 (TCAVDT) is G5 motif.

The protein belongs to the G-alpha family. G(s) subfamily. G proteins are composed of 3 units; alpha, beta and gamma. The alpha chain contains the guanine nucleotide binding site.

Guanine nucleotide-binding proteins (G proteins) are involved as modulators or transducers in various transmembrane signaling systems. The G(s) protein is involved in hormonal regulation of adenylate cyclase: it activates the cyclase in response to beta-adrenergic stimuli. In Lymnaea stagnalis (Great pond snail), this protein is Guanine nucleotide-binding protein G(s) subunit alpha.